Here is a 349-residue protein sequence, read N- to C-terminus: Terpene cyclase janA (349 aa).

The N-linked (GlcNAc...) asparagine glycan is linked to Asn-80. Helical transmembrane passes span Leu-81–Leu-101, Leu-116–Ile-136, Ile-155–Leu-175, Leu-189–Tyr-209, Ile-223–Ala-243, and Val-308–Leu-328.

The protein belongs to the membrane-bound ascI terpene cyclase family.

It is found in the membrane. Its pathway is secondary metabolite biosynthesis. In terms of biological role, part of the gene cluster that mediates the biosynthesis of the indole diterpenes janthitremanes such as shearinine K or shearinine A. The geranylgeranyl diphosphate (GGPP) synthase janG catalyzes the first step in janthitremane biosynthesis via conversion of farnesyl pyrophosphate and isopentyl pyrophosphate into geranylgeranyl pyrophosphate (GGPP). Condensation of indole-3-glycerol phosphate with GGPP by the prenyl transferase janC then forms 3-geranylgeranylindole (3-GGI). Epoxidation by the FAD-dependent monooxygenase janM leads to a epoxidized-GGI that is substrate of the terpene cyclase janB for cyclization to yield paspaline. Paspaline is subsequently converted to 13-desoxypaspaline by the cytochrome P450 monooxygenase janP, via beta-PC-M6 in a series of alpha-face oxidations. The cytochrome P450 monooxygenase janQ is proposed to carry out sequential beta-face oxidation steps at C-7 and C-13 of 13-desoxypaspaline to form paspalicine and paspalinine respectively. The indole diterpene prenyltransferase janD may then convert paspalinine into shearinine K which is substrate of janO and/or additional enzymes for oxidation and cyclization to generate shearinine A. This is Terpene cyclase janA from Penicillium janthinellum (Penicillium vitale).